We begin with the raw amino-acid sequence, 240 residues long: Transcriptional regulatory protein ChvI (240 aa).

Residues 3–116 (TIALVDDDRN…LLVERVKAIL (114 aa)) enclose the Response regulatory domain. 3 residues coordinate Mg(2+): aspartate 8, aspartate 9, and aspartate 52. Aspartate 52 is modified (4-aspartylphosphate). The segment at residues 139-238 (SRSLERGQLV…LYGVGYRFRE (100 aa)) is a DNA-binding region (ompR/PhoB-type).

Requires Mg(2+) as cofactor. Phosphorylated by ChvG.

The protein localises to the cytoplasm. It functions in the pathway glycan metabolism; exopolysaccharide biosynthesis. Its function is as follows. Member of a two-component regulatory system ChvG(ExoS)/ChvI involved in regulating the production of succinoglycan. The polypeptide is Transcriptional regulatory protein ChvI (chvI) (Rhizobium meliloti (strain 1021) (Ensifer meliloti)).